The primary structure comprises 372 residues: Protein phosphatase Mn(2+)-dependent 1K (372 aa).

A mitochondrion-targeting transit peptide spans 1-29 (MLSAAFITLLRSGGNQVKKRVLLSSILLQ). A critical for association with the BCKDH complex region spans residues 46–61 (RCSRFDPDGSGQPATW). The 253-residue stretch at 94-346 (NVGCASLIGK…DNSTAVVVPF (253 aa)) folds into the PPM-type phosphatase domain. Residues aspartate 127 and glycine 128 each contribute to the Mn(2+) site. Serine 248 is modified (phosphoserine). The Mn(2+) site is built by aspartate 298 and aspartate 337.

This sequence belongs to the PP2C family. In terms of assembly, monomer. Interacts with E1 and E2 components of the branched-chain alpha-ketoacid dehydrogenase (BCKDH) complex; this interaction requires colocalization in mitochondria. Interacts with BCKDHA but not with BCKDHB of the E1 component. Interacts with the 24-meric E2 core composed of DBT monomers with a 24:1 stoichiometry; the N-terminal region (residues 49-61) of PPM1K and C-terminal linker of the lipoyl domain of DBT (residues 145-160) are critical for this interaction, whereas the lipoyl prosthetic group is dispensable. Competes with BCKDK for binding to the E2 core; this interaction is modulated by branched-chain alpha-keto acids. At steady state, BCKDH holoenzyme preferentially binds BCKDK and BCKDHA is phosphorylated. In response to high levels of branched-chain alpha-keto acids, the inhibitory BCKDK is replaced by activating PPM1K leading to BCKDHA dephosphorylation and BCAA degradation. Mn(2+) serves as cofactor. In terms of tissue distribution, highly expressed in the heart, kidney, brain and liver and to a lesser extent in testis, lung, spleen and adipose tissue. Very low amount in muscle (at protein level). Also expressed in the thymus (at protein level) and the diaphragm. Significantly reduced in hypertrophied hearts.

The protein resides in the mitochondrion matrix. The catalysed reaction is O-phospho-L-seryl-[3-methyl-2-oxobutanoate dehydrogenase] + H2O = L-seryl-[3-methyl-2-oxobutanoate dehydrogenase] + phosphate. The enzyme catalyses O-phospho-L-seryl-[protein] + H2O = L-seryl-[protein] + phosphate. It participates in protein modification. Its function is as follows. Serine/threonine-protein phosphatase component of macronutrients metabolism. Forms a functional kinase and phosphatase pair with BCKDK, serving as a metabolic regulatory node that coordinates branched-chain amino acids (BCAAs) with glucose and lipid metabolism via two distinct phosphoprotein targets: mitochondrial BCKDHA subunit of the branched-chain alpha-ketoacid dehydrogenase (BCKDH) complex and cytosolic ACLY, a lipogenic enzyme of Krebs cycle. At high levels of branched-chain ketoacids, dephosphorylates and activates mitochondrial BCKDH complex, a multisubunit complex consisting of three multimeric components each involved in different steps of BCAA catabolism: E1 composed of BCKDHA and BCKDHB, E2 core composed of DBT monomers, and E3 composed of DLD monomers. Tightly associates with the E2 component of BCKDH complex and dephosphorylates BCKDHA on Ser-334. Regulates the reversible phosphorylation of ACLY in response to changes in cellular carbohydrate abundance such as occurs during fasting to feeding metabolic transition. At fasting state, appears to dephosphorylate ACLY on Ser-455 and inactivate it. Refeeding stimulates MLXIPL/ChREBP transcription factor, leading to increased BCKDK to PPM1K expression ratio, phosphorylation and activation of ACLY that ultimately results in the generation of malonyl-CoA and oxaloacetate immediate substrates of de novo lipogenesis and gluconeogenesis, respectively. Recognizes phosphosites having SxS or RxxS motifs and strictly depends on Mn(2+) ions for the phosphatase activity. Regulates Ca(2+)-induced opening of mitochondrial transition pore and apoptotic cell death. In Mus musculus (Mouse), this protein is Protein phosphatase Mn(2+)-dependent 1K.